We begin with the raw amino-acid sequence, 121 residues long: Non-structural protein 8 (121 aa).

The first 15 residues, 1–15 (MKLLIVFGLLTSVYC), serve as a signal peptide directing secretion. The SARS ORF8 Ig-like domain maps to 19 to 121 (ECSIQECCEN…HDVRVVLDFI (103 aa)). Intrachain disulfides connect C25–C90, C37–C102, and C61–C83.

In Rhinolophus macrotis (Big-eared horseshoe bat), this protein is Non-structural protein 8.